Reading from the N-terminus, the 597-residue chain is Elongation factor 4 (597 aa).

The tr-type G domain maps to 2–184; that stretch reads KNIRNFSIIA…SIVEHLPAPE (183 aa). Residues 14 to 19 and 131 to 134 each bind GTP; these read DHGKST and NKID.

The protein belongs to the TRAFAC class translation factor GTPase superfamily. Classic translation factor GTPase family. LepA subfamily.

The protein resides in the cell inner membrane. The enzyme catalyses GTP + H2O = GDP + phosphate + H(+). Its function is as follows. Required for accurate and efficient protein synthesis under certain stress conditions. May act as a fidelity factor of the translation reaction, by catalyzing a one-codon backward translocation of tRNAs on improperly translocated ribosomes. Back-translocation proceeds from a post-translocation (POST) complex to a pre-translocation (PRE) complex, thus giving elongation factor G a second chance to translocate the tRNAs correctly. Binds to ribosomes in a GTP-dependent manner. The protein is Elongation factor 4 of Desulfotalea psychrophila (strain LSv54 / DSM 12343).